A 447-amino-acid polypeptide reads, in one-letter code: Ribosomal protein uS12 methylthiotransferase RimO (447 aa).

The MTTase N-terminal domain occupies 10–120 (PKVGFVSLGC…VVNAVHDVVP (111 aa)). [4Fe-4S] cluster is bound by residues Cys19, Cys55, Cys84, Cys153, Cys157, and Cys160. One can recognise a Radical SAM core domain in the interval 139–377 (LTPRHYAYLK…MAHQQAISAA (239 aa)). Residues 380–447 (QMKIGKEIEV…DEYDLWAEML (68 aa)) enclose the TRAM domain.

This sequence belongs to the methylthiotransferase family. RimO subfamily. The cofactor is [4Fe-4S] cluster.

The protein localises to the cytoplasm. It catalyses the reaction L-aspartate(89)-[ribosomal protein uS12]-hydrogen + (sulfur carrier)-SH + AH2 + 2 S-adenosyl-L-methionine = 3-methylsulfanyl-L-aspartate(89)-[ribosomal protein uS12]-hydrogen + (sulfur carrier)-H + 5'-deoxyadenosine + L-methionine + A + S-adenosyl-L-homocysteine + 2 H(+). In terms of biological role, catalyzes the methylthiolation of an aspartic acid residue of ribosomal protein uS12. This chain is Ribosomal protein uS12 methylthiotransferase RimO, found in Pseudomonas syringae pv. syringae (strain B728a).